An 891-amino-acid chain; its full sequence is Alanine--tRNA ligase (891 aa).

Zn(2+) is bound by residues histidine 564, histidine 568, cysteine 681, and histidine 685.

This sequence belongs to the class-II aminoacyl-tRNA synthetase family. Requires Zn(2+) as cofactor.

Its subcellular location is the cytoplasm. The enzyme catalyses tRNA(Ala) + L-alanine + ATP = L-alanyl-tRNA(Ala) + AMP + diphosphate. Functionally, catalyzes the attachment of alanine to tRNA(Ala) in a two-step reaction: alanine is first activated by ATP to form Ala-AMP and then transferred to the acceptor end of tRNA(Ala). Also edits incorrectly charged Ser-tRNA(Ala) and Gly-tRNA(Ala) via its editing domain. This is Alanine--tRNA ligase from Methylorubrum extorquens (strain PA1) (Methylobacterium extorquens).